The sequence spans 313 residues: Dimethyladenosine transferase (313 aa).

The disordered stretch occupies residues 1–21 (MPKVKSGAIGRRRGRQEQRRE). Positions 37, 39, 64, 85, 113, and 128 each coordinate S-adenosyl-L-methionine.

The protein belongs to the class I-like SAM-binding methyltransferase superfamily. rRNA adenine N(6)-methyltransferase family. Part of the small subunit (SSU) processome, composed of more than 70 proteins and the RNA chaperone small nucleolar RNA (snoRNA) U3.

The protein localises to the nucleus. Its subcellular location is the nucleoplasm. It is found in the nucleolus. It catalyses the reaction adenosine(1779)/adenosine(1780) in 18S rRNA + 4 S-adenosyl-L-methionine = N(6)-dimethyladenosine(1779)/N(6)-dimethyladenosine(1780) in 18S rRNA + 4 S-adenosyl-L-homocysteine + 4 H(+). In terms of biological role, specifically dimethylates two adjacent adenosines in the loop of a conserved hairpin near the 3'-end of 18S rRNA in the 40S particle. Involved in the pre-rRNA processing steps leading to small-subunit rRNA production independently of its RNA-modifying catalytic activity. Part of the small subunit (SSU) processome, first precursor of the small eukaryotic ribosomal subunit. During the assembly of the SSU processome in the nucleolus, many ribosome biogenesis factors, an RNA chaperone and ribosomal proteins associate with the nascent pre-rRNA and work in concert to generate RNA folding, modifications, rearrangements and cleavage as well as targeted degradation of pre-ribosomal RNA by the RNA exosome. In Macaca fascicularis (Crab-eating macaque), this protein is Dimethyladenosine transferase (DIMT1).